The following is a 126-amino-acid chain: FCS-Like Zinc finger 7 (126 aa).

The FLZ-type zinc finger occupies 72–116; sequence SFLVNCGFCKRGLAPGRDIYMYKGDAAFCSIECREQQMEHDEGKT.

It belongs to the FLZ family. In terms of assembly, interacts with KIN10 and KIN11 via its FLZ-type zinc finger domain. Interacts with KINB3 via its N-terminal part. Forms homodimer and heterodimer with FLZ1, FLZ2 and FLZ15 in vitro.

The protein localises to the cytoplasm. The protein resides in the nucleus. Functionally, may act as an adapter to facilitate the interaction of SnRK1 complex with effector proteins, conferring tissue- and stimulus-type specific differences in the SnRK1 regulation pathway. This Arabidopsis thaliana (Mouse-ear cress) protein is FCS-Like Zinc finger 7.